The chain runs to 131 residues: Protein FAM107B (131 aa).

The residue at position 2 (A2) is an N-acetylalanine. Disordered regions lie at residues 39–78 and 100–131; these read MNQK…KKKS and KLQE…AQES. K50 carries the N6-acetyllysine modification. The span at 52–78 shows a compositional bias: basic and acidic residues; that stretch reads ELQKVMEKRKRDQVIKQKEEEAQKKKS. The stretch at 61–112 forms a coiled coil; it reads KRDQVIKQKEEEAQKKKSDLEIELLKRQQKLEQLELEKQKLQEEQENAPEFV.

This sequence belongs to the FAM107 family.

In Homo sapiens (Human), this protein is Protein FAM107B.